A 221-amino-acid polypeptide reads, in one-letter code: Epididymal secretory glutathione peroxidase (221 aa).

The N-terminal stretch at 1–21 is a signal peptide; sequence MTTQLRVVHLLPLLLACFVQT. The active site involves Cys-73.

The protein belongs to the glutathione peroxidase family. As to expression, epididymis.

It is found in the secreted. The catalysed reaction is 2 glutathione + H2O2 = glutathione disulfide + 2 H2O. Its function is as follows. Protects cells and enzymes from oxidative damage, by catalyzing the reduction of hydrogen peroxide, lipid peroxides and organic hydroperoxide, by glutathione. May constitute a glutathione peroxidase-like protective system against peroxide damage in sperm membrane lipids. This Macaca fascicularis (Crab-eating macaque) protein is Epididymal secretory glutathione peroxidase (GPX5).